The following is a 213-amino-acid chain: Pyridoxine/pyridoxamine 5'-phosphate oxidase (213 aa).

Substrate-binding positions include 9-12 (RKDY) and K67. Residues 62–67 (RIVLLK), 77–78 (FT), R83, K84, and Q106 contribute to the FMN site. The substrate site is built by Y124, R128, and S132. FMN is bound by residues 141 to 142 (QS) and W186. 192–194 (RLH) lines the substrate pocket. R196 provides a ligand contact to FMN.

The protein belongs to the pyridoxamine 5'-phosphate oxidase family. As to quaternary structure, homodimer. It depends on FMN as a cofactor.

It carries out the reaction pyridoxamine 5'-phosphate + O2 + H2O = pyridoxal 5'-phosphate + H2O2 + NH4(+). The enzyme catalyses pyridoxine 5'-phosphate + O2 = pyridoxal 5'-phosphate + H2O2. Its pathway is cofactor metabolism; pyridoxal 5'-phosphate salvage; pyridoxal 5'-phosphate from pyridoxamine 5'-phosphate: step 1/1. It functions in the pathway cofactor metabolism; pyridoxal 5'-phosphate salvage; pyridoxal 5'-phosphate from pyridoxine 5'-phosphate: step 1/1. Catalyzes the oxidation of either pyridoxine 5'-phosphate (PNP) or pyridoxamine 5'-phosphate (PMP) into pyridoxal 5'-phosphate (PLP). This Cyanothece sp. (strain PCC 7425 / ATCC 29141) protein is Pyridoxine/pyridoxamine 5'-phosphate oxidase.